Reading from the N-terminus, the 509-residue chain is NADH dehydrogenase (509 aa).

The tract at residues methionine 1–glycine 183 is membrane-binding. The tract at residues arginine 184–asparagine 509 is catalytic. FAD is bound at residue aspartate 210–phenylalanine 241. A disulfide bridge links cysteine 337 with cysteine 340. Aspartate 349–alanine 379 is an NAD(+) binding site. An FAD-binding site is contributed by threonine 469–aspartate 479.

Belongs to the class-II pyridine nucleotide-disulfide oxidoreductase family. In terms of assembly, homodimer. FAD is required as a cofactor.

It is found in the cell membrane. The enzyme catalyses a ubiquinone + NADH + 5 H(+)(in) = a ubiquinol + NAD(+) + 4 H(+)(out). Functionally, transfer of electrons from NADH to the respiratory chain. The immediate electron acceptor for the enzyme is believed to be ubiquinone. The chain is NADH dehydrogenase (ahpF) from Bacillus subtilis (strain 168).